The chain runs to 295 residues: MTSDVETTAEQQEVLIVTGMSGAGRSTVANALEDLDWYVVDNLPPQMLRPLIELANRAESGLPRIAAVVDVRGRNFFADLQEMIQSLREGTKVRVLFLEAADVTLVRRFEQVRRPHPLQGNGTLLDGITAERARLREIRESSDIIVDTSDLNIHQLATRITDIFADENTADVQVTVMSFGFKYGLPADADLVADARFLPNPFWKPELRPYTGLDEVVRNDVLQQNGAEEFIESYLEALRPIFAGYQRENKRHATIAVGCTGGKHRSVAIAEELAARLRSLPGLAVSIKHRDLGRE.

19-26 (GMSGAGRS) contacts ATP. 70-73 (DVRG) is a binding site for GTP.

It belongs to the RapZ-like family.

Displays ATPase and GTPase activities. This chain is Nucleotide-binding protein Lxx11490, found in Leifsonia xyli subsp. xyli (strain CTCB07).